A 471-amino-acid polypeptide reads, in one-letter code: Ribulose bisphosphate carboxylase large chain (471 aa).

Positions 115 and 165 each coordinate substrate. Catalysis depends on K167, which acts as the Proton acceptor. K169 is a substrate binding site. Mg(2+) is bound by residues K193, D195, and E196. N6-carboxylysine is present on K193. H286 serves as the catalytic Proton acceptor. The substrate site is built by R287, H319, and S371.

The protein belongs to the RuBisCO large chain family. Type I subfamily. In terms of assembly, heterohexadecamer of 8 large chains and 8 small chains. Mg(2+) is required as a cofactor.

It is found in the carboxysome. The catalysed reaction is 2 (2R)-3-phosphoglycerate + 2 H(+) = D-ribulose 1,5-bisphosphate + CO2 + H2O. It catalyses the reaction D-ribulose 1,5-bisphosphate + O2 = 2-phosphoglycolate + (2R)-3-phosphoglycerate + 2 H(+). Its function is as follows. RuBisCO catalyzes two reactions: the carboxylation of D-ribulose 1,5-bisphosphate, the primary event in carbon dioxide fixation, as well as the oxidative fragmentation of the pentose substrate in the photorespiration process. Both reactions occur simultaneously and in competition at the same active site. The polypeptide is Ribulose bisphosphate carboxylase large chain (Prochlorococcus marinus (strain MIT 9515)).